Consider the following 458-residue polypeptide: Argininosuccinate lyase (458 aa).

This sequence belongs to the lyase 1 family. Argininosuccinate lyase subfamily.

Its subcellular location is the cytoplasm. It carries out the reaction 2-(N(omega)-L-arginino)succinate = fumarate + L-arginine. It participates in amino-acid biosynthesis; L-arginine biosynthesis; L-arginine from L-ornithine and carbamoyl phosphate: step 3/3. The protein is Argininosuccinate lyase of Salmonella paratyphi B (strain ATCC BAA-1250 / SPB7).